A 33-amino-acid chain; its full sequence is Protamine TP17 (33 aa).

Residues 1–33 are disordered; it reads MPRRRRSSSRPVRRRRRPRVSRRRRRRGRRRRR.

In terms of tissue distribution, testis.

Its subcellular location is the nucleus. It is found in the chromosome. Protamines substitute for histones in the chromatin of sperm during the haploid phase of spermatogenesis. They compact sperm DNA into a highly condensed, stable and inactive complex. The sequence is that of Protamine TP17 from Oncorhynchus mykiss (Rainbow trout).